Reading from the N-terminus, the 696-residue chain is Elongation factor G (696 aa).

The 283-residue stretch at 8–290 folds into the tr-type G domain; sequence ERYRNIGIMA…AVLDYLPSPL (283 aa). Residues 17–24, 88–92, and 142–145 contribute to the GTP site; these read AHIDAGKT, DTPGH, and NKMD.

It belongs to the TRAFAC class translation factor GTPase superfamily. Classic translation factor GTPase family. EF-G/EF-2 subfamily.

Its subcellular location is the cytoplasm. Catalyzes the GTP-dependent ribosomal translocation step during translation elongation. During this step, the ribosome changes from the pre-translocational (PRE) to the post-translocational (POST) state as the newly formed A-site-bound peptidyl-tRNA and P-site-bound deacylated tRNA move to the P and E sites, respectively. Catalyzes the coordinated movement of the two tRNA molecules, the mRNA and conformational changes in the ribosome. The sequence is that of Elongation factor G from Nitrosomonas europaea (strain ATCC 19718 / CIP 103999 / KCTC 2705 / NBRC 14298).